The following is a 136-amino-acid chain: MEKVDRIIQMEIGRINSHLPKARKSLCELLKEDSPSIELRDGSLHYFRRSELEFLKTLAGEEACLVKLPIILELSTLDRGYFVVRGRGEVRVIKKLLELSEDIYLEENTVRLPRYYLPTIRRKLPTTTVYAFITEW.

The protein belongs to the UPF0216 family.

The sequence is that of UPF0216 protein PF0452 from Pyrococcus furiosus (strain ATCC 43587 / DSM 3638 / JCM 8422 / Vc1).